We begin with the raw amino-acid sequence, 240 residues long: uncharacterized protein (240 aa).

The interval 216–240 (MKQSKNKPRIRQAVGATRQCRKPQA) is disordered.

This is an uncharacterized protein from Escherichia coli (strain K12).